Here is a 251-residue protein sequence, read N- to C-terminus: tRNA (guanine-N(1)-)-methyltransferase (251 aa).

S-adenosyl-L-methionine is bound by residues Gly111 and 131-136; that span reads LGDFVL.

This sequence belongs to the RNA methyltransferase TrmD family. As to quaternary structure, homodimer.

The protein resides in the cytoplasm. It catalyses the reaction guanosine(37) in tRNA + S-adenosyl-L-methionine = N(1)-methylguanosine(37) in tRNA + S-adenosyl-L-homocysteine + H(+). Its function is as follows. Specifically methylates guanosine-37 in various tRNAs. In Synechococcus sp. (strain JA-2-3B'a(2-13)) (Cyanobacteria bacterium Yellowstone B-Prime), this protein is tRNA (guanine-N(1)-)-methyltransferase.